The sequence spans 82 residues: Mu-conotoxin MrVIB (82 aa).

An N-terminal signal peptide occupies residues 1–22 (MKLTCMMIVAVLFLTAWTLVMA). A propeptide spanning residues 23–49 (DDSNNGLANHFLKSRDEMEDPEASKLE) is cleaved from the precursor. Disulfide bonds link Cys53–Cys71, Cys60–Cys76, and Cys70–Cys81.

Belongs to the conotoxin O1 superfamily. In terms of tissue distribution, expressed by the venom duct.

It localises to the secreted. In terms of biological role, muO-conotoxins are gating-modifier toxins that inhibit sodium current by trapping the domain II voltage sensor in the closed position to prevent opening of the sodium channel. This toxin has a preference for Nav1.4/SCN4A over Nav1.2/SCN2A sodium channels. It blocks Nav channels by interacting mainly with the C-terminal part of the pore loop of domain-3. It also blocks fast-inactivating calcium current. Blocks Nav1.8/SCN10A sodium channels and has potent and long-lasting local anesthetic effects. It can also block propagation of action potentials in A- and C-fibers in sciatic nerve as well as skeletal muscle in isolated preparations. The chain is Mu-conotoxin MrVIB from Conus marmoreus (Marble cone).